The following is a 1227-amino-acid chain: Anion exchange protein 3 (1227 aa).

Positions 1 to 15 (MANGVIPPPGGPSPL) are enriched in pro residues. 3 disordered regions span residues 1–255 (MANG…TDEA), 286–312 (KPSR…KKKK), and 428–497 (NDDK…GDGH). Over 1–707 (MANGVIPPPG…DLRDALHSQC (707 aa)) the chain is Cytoplasmic. Over residues 58–75 (DPEKPSRSYSERDFEFHR) the composition is skewed to basic and acidic residues. Basic residues-rich tracts occupy residues 76–97 (HTSH…KLRR) and 104–113 (RHARRKRKKE). The span at 134-152 (AEEEEEEEEEEEGESEAEP) shows a compositional bias: acidic residues. 4 positions are modified to phosphoserine: Ser167, Ser170, Ser175, and Ser198. Residues 194-215 (PSDQSPQRSGSSPSPRARASRI) are compositionally biased toward low complexity. Position 294 is an omega-N-methylarginine (Arg294). Residues 435-448 (FFPRNPSSSSVNSV) show a composition bias toward low complexity. The segment covering 480 to 497 (HDPDAKEKPLHMPGGDGH) has biased composition (basic and acidic residues). 4 helical membrane-spanning segments follow: residues 708–730 (VAAV…GLLG), 736–773 (LMGV…LLVF), 793–815 (VWVG…SFLV), and 825–846 (IFAF…YKVF). The interval 708–1227 (VAAVLFIYFA…DEYNELHMPV (520 aa)) is membrane (anion exchange). Asn868 is a glycosylation site (N-linked (GlcNAc...) asparagine). The chain crosses the membrane as a helical span at residues 888 to 905 (ALLSLILMLGTFLIAFFL). At 906 to 920 (RKFRNSRFLGGKARR) the chain is on the cytoplasmic side. Transmembrane regions (helical) follow at residues 921-941 (VIGD…DYSI), 975-997 (PFPP…LIFM), 1023-1044 (LLLI…LTAA), 1078-1123 (VTGV…IQLS), and 1150-1186 (MHLF…TVPL). Residue Cys1160 is the site of S-palmitoyl cysteine attachment.

The protein belongs to the anion exchanger (TC 2.A.31) family. Expressed in the brain and heart.

It localises to the cell membrane. It carries out the reaction hydrogencarbonate(in) + chloride(out) = hydrogencarbonate(out) + chloride(in). Sodium-independent anion exchanger which mediates the electroneutral exchange of chloride for bicarbonate ions across the cell membrane. May be involved in the regulation of intracellular pH, and the modulation of cardiac action potential. In Rattus norvegicus (Rat), this protein is Anion exchange protein 3 (Slc4a3).